Here is a 502-residue protein sequence, read N- to C-terminus: CBL-interacting serine/threonine-protein kinase 13 (502 aa).

The segment at 32–51 (TNKETSTPESPRSPRTPQGS) is disordered. Residues 35 to 48 (ETSTPESPRSPRTP) show a composition bias toward low complexity. One can recognise a Protein kinase domain in the interval 57–311 (YEIGKLLGHG…IPEIMKHRWF (255 aa)). ATP is bound by residues 63–71 (LGHGSFAKV) and lysine 86. Aspartate 179 functions as the Proton acceptor in the catalytic mechanism. The activation loop stretch occupies residues 197–226 (DFGLSVVSEQLKQEGICQTFCGTPAYLAPE). The residue at position 201 (serine 201) is a Phosphoserine. A Phosphothreonine modification is found at threonine 215. A disordered region spans residues 331-359 (DDDNDDDDSSSLSSGRSSTASEGDAEFDI). Over residues 340–352 (SSLSSGRSSTASE) the composition is skewed to low complexity. Positions 366–387 (PRPASLNAFDILSFSDLSGLFE) constitute an NAF domain. The PPI stretch occupies residues 390–419 (GQGARFVSAAPMTKIISKLEEIAKEVKFMV).

The protein belongs to the protein kinase superfamily. CAMK Ser/Thr protein kinase family. SNF1 subfamily. Interacts with CBL2 and CBL3. The cofactor is Mn(2+).

It catalyses the reaction L-seryl-[protein] + ATP = O-phospho-L-seryl-[protein] + ADP + H(+). It carries out the reaction L-threonyl-[protein] + ATP = O-phospho-L-threonyl-[protein] + ADP + H(+). Functionally, CIPK serine-threonine protein kinases interact with CBL proteins. Binding of a CBL protein to the regulatory NAF domain of CIPK protein lead to the activation of the kinase in a calcium-dependent manner. This chain is CBL-interacting serine/threonine-protein kinase 13 (CIPK13), found in Arabidopsis thaliana (Mouse-ear cress).